The following is a 387-amino-acid chain: Pepsin A (387 aa).

The first 16 residues, 1 to 16 (MKKLLLLLGLVALSEC), serve as a signal peptide directing secretion. A propeptide spans 17-61 (LYKVPLVKKKSLRQNLIENGLLKDFLAKHNVNPASKYFPTEAATE) (activation peptide). The Peptidase A1 domain occupies 75 to 384 (YFGTIGIGTP…DRGNNRVGLA (310 aa)). The active site involves aspartate 93. Cysteine 106 and cysteine 111 form a disulfide bridge. Serine 129 carries the phosphoserine modification. A disulfide bridge connects residues cysteine 267 and cysteine 271. Aspartate 276 is an active-site residue. Cysteine 310 and cysteine 343 are oxidised to a cystine.

The protein belongs to the peptidase A1 family.

The protein localises to the secreted. The catalysed reaction is Preferential cleavage: hydrophobic, preferably aromatic, residues in P1 and P1' positions. Cleaves 1-Phe-|-Val-2, 4-Gln-|-His-5, 13-Glu-|-Ala-14, 14-Ala-|-Leu-15, 15-Leu-|-Tyr-16, 16-Tyr-|-Leu-17, 23-Gly-|-Phe-24, 24-Phe-|-Phe-25 and 25-Phe-|-Tyr-26 bonds in the B chain of insulin.. Functionally, shows particularly broad specificity; although bonds involving phenylalanine and leucine are preferred, many others are also cleaved to some extent. This is Pepsin A (PGA) from Suncus murinus (Asian house shrew).